Reading from the N-terminus, the 83-residue chain is Large ribosomal subunit protein eL31 (83 aa).

It belongs to the eukaryotic ribosomal protein eL31 family.

This chain is Large ribosomal subunit protein eL31, found in Methanococcus aeolicus (strain ATCC BAA-1280 / DSM 17508 / OCM 812 / Nankai-3).